An 856-amino-acid chain; its full sequence is Alginate lyase 7 (856 aa).

8 PbH1 repeats span residues 133-155, 157-179, 180-202, 204-226, 234-256, 257-279, 280-304, and 320-342; these read DYNVTVERVEIREVSRYAFDPHE, TINLTIRDSVAHDNGKDGFVADF, QIGAVFENNVSYNNGRHGFNIVT, SHDIVFTNNVAYGNGANGLVVQR, VYNVEIEGGSFHDNGQEGVLIKM, STDVTLQGAEIYGNGYAGVRVQG, VEDVRILDNYIHDNAQSKANAEVIV, and TQNVTVKGNTIVGSANSTYGIQE. 9 Hemolysin-type calcium-binding repeats span residues 387–402, 404–421, 422–439, 538–549, 554–563, 565–581, 582–599, 715–731, and 733–749; these read GSTGNDLLTGTPIADL, VGGSGNDTLSGDAGNDVL, EGGAGSDRLTGGEGADIF, GTEGDDSLTGNA, LDGGSGNDSL, GGLGNDVLRGGAGDDIL, NGGLGRDQLSGGEGADIF, GGAGRDILNGGAGDDIL, and GGSERDTLTGGSGADVF.

The protein belongs to the D-mannuronate C5-epimerase family. Ca(2+) is required as a cofactor.

It is found in the secreted. It catalyses the reaction Eliminative cleavage of alginate to give oligosaccharides with 4-deoxy-alpha-L-erythro-hex-4-enuronosyl groups at their non-reducing ends and beta-D-mannuronate at their reducing end.. It carries out the reaction [(1-&gt;4)-beta-D-mannuronosyl](n) = [alginate](n). It functions in the pathway glycan biosynthesis; alginate biosynthesis. Inhibited by zinc. Converts beta-D-mannuronic acid (M) to alpha-L-guluronic acid (G). Has both epimerase and lyase activities. Contributes to abortive encystment by degrading the coat from inside the cyst. Important for cyst germination. The polypeptide is Alginate lyase 7 (Azotobacter vinelandii).